The primary structure comprises 230 residues: Cytidylate kinase (230 aa).

12-20 contacts ATP; that stretch reads GPSGAGKGT.

Belongs to the cytidylate kinase family. Type 1 subfamily.

It is found in the cytoplasm. The catalysed reaction is CMP + ATP = CDP + ADP. It catalyses the reaction dCMP + ATP = dCDP + ADP. The protein is Cytidylate kinase of Shewanella oneidensis (strain ATCC 700550 / JCM 31522 / CIP 106686 / LMG 19005 / NCIMB 14063 / MR-1).